Reading from the N-terminus, the 323-residue chain is Ribosomal RNA small subunit methyltransferase H (323 aa).

S-adenosyl-L-methionine-binding positions include 39–41 (GGY), Asp-57, Phe-84, Asp-103, and Gln-110.

This sequence belongs to the methyltransferase superfamily. RsmH family.

The protein localises to the cytoplasm. It catalyses the reaction cytidine(1402) in 16S rRNA + S-adenosyl-L-methionine = N(4)-methylcytidine(1402) in 16S rRNA + S-adenosyl-L-homocysteine + H(+). In terms of biological role, specifically methylates the N4 position of cytidine in position 1402 (C1402) of 16S rRNA. This is Ribosomal RNA small subunit methyltransferase H from Gluconobacter oxydans (strain 621H) (Gluconobacter suboxydans).